The primary structure comprises 734 residues: Ribosomal RNA large subunit methyltransferase K/L (734 aa).

A THUMP domain is found at 49-167 (HAYRICMWSR…KTEHTYCLDL (119 aa)).

Belongs to the methyltransferase superfamily. RlmKL family.

Its subcellular location is the cytoplasm. It catalyses the reaction guanosine(2445) in 23S rRNA + S-adenosyl-L-methionine = N(2)-methylguanosine(2445) in 23S rRNA + S-adenosyl-L-homocysteine + H(+). The enzyme catalyses guanosine(2069) in 23S rRNA + S-adenosyl-L-methionine = N(2)-methylguanosine(2069) in 23S rRNA + S-adenosyl-L-homocysteine + H(+). In terms of biological role, specifically methylates the guanine in position 2445 (m2G2445) and the guanine in position 2069 (m7G2069) of 23S rRNA. The chain is Ribosomal RNA large subunit methyltransferase K/L from Acinetobacter baumannii (strain AYE).